Reading from the N-terminus, the 706-residue chain is Septin ring organizing protein mid2 (706 aa).

Disordered regions lie at residues 62-102 (STAP…PFST) and 145-180 (DEAS…KKNP). 2 stretches are compositionally biased toward polar residues: residues 81 to 90 (YDQTLSNSSS) and 149 to 169 (NKSS…SNQG). Ser-379 is modified (phosphoserine). The 106-residue stretch at 583 to 688 (TLLCDGYLCQ…WMSTLRQHLG (106 aa)) folds into the PH domain.

Belongs to the BUD4 family.

Its subcellular location is the cytoplasm. The protein localises to the cell cortex. It localises to the cytoskeleton. Functionally, responsible for the proper stability and function of septins during cytokinesis. Required for the correct formation of the medial septin ring structure in mitosis and for the proper localization of endo-glucanases agn1 and eng1, which are needed for efficient cell separation. May act as a landmark for the localization of hydrolytic proteins to the medial region. The polypeptide is Septin ring organizing protein mid2 (mid2) (Schizosaccharomyces pombe (strain 972 / ATCC 24843) (Fission yeast)).